Here is a 151-residue protein sequence, read N- to C-terminus: Small ribosomal subunit protein uS11 (151 aa).

The interval 129–151 (IEDVTPVPSDSTRRKGGRRGRRL) is disordered. Residues 142-151 (RKGGRRGRRL) show a composition bias toward basic residues.

It belongs to the universal ribosomal protein uS11 family.

The polypeptide is Small ribosomal subunit protein uS11 (RPS14) (Procambarus clarkii (Red swamp crayfish)).